Consider the following 73-residue polypeptide: Toxin Td4 (73 aa).

A signal peptide spans 1 to 7 (IGMVVEC). One can recognise an LCN-type CS-alpha/beta domain in the interval 8-70 (KDGYLVGNDG…TWDRATNRCG (63 aa)). 4 disulfides stabilise this stretch: C18-C69, C22-C44, C30-C50, and C34-C52. At R71 the chain carries Arginine amide.

The protein belongs to the long (4 C-C) scorpion toxin superfamily. Sodium channel inhibitor family. Beta subfamily. As to expression, expressed by the venom gland.

It localises to the secreted. Its function is as follows. Beta toxins bind voltage-independently at site-4 of sodium channels (Nav) and shift the voltage of activation toward more negative potentials thereby affecting sodium channel activation and promoting spontaneous and repetitive firing. The protein is Toxin Td4 of Tityus discrepans (Venezuelan scorpion).